The sequence spans 707 residues: Elongation factor G (707 aa).

Positions 8-288 (QFTRNIGIMA…AVCKFLPSPA (281 aa)) constitute a tr-type G domain. GTP-binding positions include 17-24 (AHIDAGKT), 85-89 (DTPGH), and 139-142 (NKMD). The segment at 288–308 (ADTPTVEGTDPSDPNKVIERK) is disordered.

This sequence belongs to the TRAFAC class translation factor GTPase superfamily. Classic translation factor GTPase family. EF-G/EF-2 subfamily.

It localises to the cytoplasm. Catalyzes the GTP-dependent ribosomal translocation step during translation elongation. During this step, the ribosome changes from the pre-translocational (PRE) to the post-translocational (POST) state as the newly formed A-site-bound peptidyl-tRNA and P-site-bound deacylated tRNA move to the P and E sites, respectively. Catalyzes the coordinated movement of the two tRNA molecules, the mRNA and conformational changes in the ribosome. This chain is Elongation factor G, found in Porphyromonas gingivalis (strain ATCC 33277 / DSM 20709 / CIP 103683 / JCM 12257 / NCTC 11834 / 2561).